The following is a 261-amino-acid chain: Hemin import ATP-binding protein HmuV (261 aa).

Positions 2-243 (LCANNVSAQI…ALLKRVYNIN (242 aa)) constitute an ABC transporter domain. 34–41 (GPNGAGKS) is an ATP binding site.

The protein belongs to the ABC transporter superfamily. Heme (hemin) importer (TC 3.A.1.14.5) family. As to quaternary structure, the complex is composed of two ATP-binding proteins (HmuV), two transmembrane proteins (HmuU) and a solute-binding protein (HmuT).

The protein localises to the cell inner membrane. Its function is as follows. Part of the ABC transporter complex HmuTUV involved in hemin import. Responsible for energy coupling to the transport system. The polypeptide is Hemin import ATP-binding protein HmuV (Pseudoalteromonas translucida (strain TAC 125)).